A 160-amino-acid chain; its full sequence is Phosphopantetheine adenylyltransferase (160 aa).

A substrate-binding site is contributed by S10. ATP is bound by residues 10-11 (SF) and H18. The substrate site is built by K42, L74, and R88. ATP-binding positions include 89–91 (GLR), E99, and 124–130 (YSFLSSS).

This sequence belongs to the bacterial CoaD family. In terms of assembly, homohexamer. Mg(2+) serves as cofactor.

The protein localises to the cytoplasm. It carries out the reaction (R)-4'-phosphopantetheine + ATP + H(+) = 3'-dephospho-CoA + diphosphate. It functions in the pathway cofactor biosynthesis; coenzyme A biosynthesis; CoA from (R)-pantothenate: step 4/5. Reversibly transfers an adenylyl group from ATP to 4'-phosphopantetheine, yielding dephospho-CoA (dPCoA) and pyrophosphate. This is Phosphopantetheine adenylyltransferase from Bacillus velezensis (strain DSM 23117 / BGSC 10A6 / LMG 26770 / FZB42) (Bacillus amyloliquefaciens subsp. plantarum).